The following is a 322-amino-acid chain: TATA box-binding protein-like 2 (322 aa).

The disordered stretch occupies residues 31-54; it reads PALSSTQDSTYLSGRAGPSRESGA. The span at 32–42 shows a compositional bias: polar residues; it reads ALSSTQDSTYL.

It belongs to the TBP family.

The protein resides in the nucleus. TATA box-binding transcription factor. Members of the TBP family are differentially required to regulate transcription and development during early embryogenesis. The chain is TATA box-binding protein-like 2 from Takifugu rubripes (Japanese pufferfish).